The sequence spans 156 residues: Putative pre-16S rRNA nuclease (156 aa).

This sequence belongs to the YqgF nuclease family.

It is found in the cytoplasm. In terms of biological role, could be a nuclease involved in processing of the 5'-end of pre-16S rRNA. This is Putative pre-16S rRNA nuclease from Ehrlichia ruminantium (strain Gardel).